A 676-amino-acid chain; its full sequence is Probable metal-nicotianamine transporter YSL6 (676 aa).

A run of 13 helical transmembrane segments spans residues 38–58 (ITIR…IITH), 62–82 (LTVG…FFFV), 110–130 (CVVA…LIAM), 154–174 (GLWW…FSLV), 276–296 (IVNC…WPFV), 321–341 (VFIA…KIIA), 392–412 (FAIA…PIIF), 413–433 (PPLK…LAFC), 452–472 (IGLF…AGLA), 510–530 (VGTA…WTAF), 561–581 (LPKH…IVNL), 604–624 (FYIG…LFVW), and 639–659 (VASG…ILSI).

It belongs to the YSL (TC 2.A.67.2) family.

The protein localises to the membrane. In terms of biological role, may be involved in the transport of nicotianamine-chelated metals. In Arabidopsis thaliana (Mouse-ear cress), this protein is Probable metal-nicotianamine transporter YSL6 (YSL6).